The chain runs to 647 residues: Acetyl-coenzyme A synthetase (647 aa).

Residues 190–193 (RGGK), Thr-310, and Asn-334 contribute to the CoA site. Residues 386 to 388 (GEP), 410 to 415 (DTWWQT), Asp-499, and Arg-514 each bind ATP. Ser-522 is a binding site for CoA. Arg-525 is a binding site for ATP. The Mg(2+) site is built by Val-536, His-538, and Val-541. Arg-583 is a binding site for CoA. The residue at position 608 (Lys-608) is an N6-acetyllysine.

This sequence belongs to the ATP-dependent AMP-binding enzyme family. The cofactor is Mg(2+). Post-translationally, acetylated. Deacetylation by the SIR2-homolog deacetylase activates the enzyme.

It carries out the reaction acetate + ATP + CoA = acetyl-CoA + AMP + diphosphate. Functionally, catalyzes the conversion of acetate into acetyl-CoA (AcCoA), an essential intermediate at the junction of anabolic and catabolic pathways. AcsA undergoes a two-step reaction. In the first half reaction, AcsA combines acetate with ATP to form acetyl-adenylate (AcAMP) intermediate. In the second half reaction, it can then transfer the acetyl group from AcAMP to the sulfhydryl group of CoA, forming the product AcCoA. The protein is Acetyl-coenzyme A synthetase of Xanthomonas oryzae pv. oryzae (strain MAFF 311018).